Consider the following 265-residue polypeptide: Acyl-[acyl-carrier-protein]--UDP-N-acetylglucosamine O-acyltransferase (265 aa).

This sequence belongs to the transferase hexapeptide repeat family. LpxA subfamily. Homotrimer.

It localises to the cytoplasm. The enzyme catalyses a (3R)-hydroxyacyl-[ACP] + UDP-N-acetyl-alpha-D-glucosamine = a UDP-3-O-[(3R)-3-hydroxyacyl]-N-acetyl-alpha-D-glucosamine + holo-[ACP]. It functions in the pathway glycolipid biosynthesis; lipid IV(A) biosynthesis; lipid IV(A) from (3R)-3-hydroxytetradecanoyl-[acyl-carrier-protein] and UDP-N-acetyl-alpha-D-glucosamine: step 1/6. In terms of biological role, involved in the biosynthesis of lipid A, a phosphorylated glycolipid that anchors the lipopolysaccharide to the outer membrane of the cell. This chain is Acyl-[acyl-carrier-protein]--UDP-N-acetylglucosamine O-acyltransferase, found in Polynucleobacter asymbioticus (strain DSM 18221 / CIP 109841 / QLW-P1DMWA-1) (Polynucleobacter necessarius subsp. asymbioticus).